Reading from the N-terminus, the 100-residue chain is MELTPREKDKLLIFTAALLAERRKARGLKLNYPEAVALISAAIMEGARDGKSVAELMSDGKRVLARHEVMDGVAEMIPDIQIEATFPDGTKLVTVHQPIA.

The protein belongs to the urease gamma subunit family. In terms of assembly, heterotrimer of UreA (gamma), UreB (beta) and UreC (alpha) subunits. Three heterotrimers associate to form the active enzyme.

It is found in the cytoplasm. It catalyses the reaction urea + 2 H2O + H(+) = hydrogencarbonate + 2 NH4(+). The protein operates within nitrogen metabolism; urea degradation; CO(2) and NH(3) from urea (urease route): step 1/1. The protein is Urease subunit gamma of Leptothrix cholodnii (strain ATCC 51168 / LMG 8142 / SP-6) (Leptothrix discophora (strain SP-6)).